The sequence spans 414 residues: uncharacterized protein (414 aa).

This is an uncharacterized protein from Rickettsia conorii (strain ATCC VR-613 / Malish 7).